Consider the following 381-residue polypeptide: Guanine nucleotide-binding protein G(olf) subunit alpha (381 aa).

The interval 1 to 25 (MGCLGNSSKTAEDQGVDEKERREAN) is disordered. Gly2 carries N-palmitoyl glycine lipidation. The S-palmitoyl cysteine moiety is linked to residue Cys3. The segment covering 10 to 25 (TAEDQGVDEKERREAN) has biased composition (basic and acidic residues). The G-alpha domain occupies 41–381 (ATHRLLLLGA…RMHLKQYELL (341 aa)). The G1 motif stretch occupies residues 44–57 (RLLLLGAGESGKST). GTP contacts are provided by Glu52, Ser53, Gly54, Lys55, Ser56, and Thr57. Ser56 provides a ligand contact to Mg(2+). Thr178 carries the post-translational modification Phosphothreonine. Residues 183-191 (DLLRCRVLT) are G2 motif. GTP contacts are provided by Leu185, Arg186, and Thr191. Positions 191 and 210 each coordinate Mg(2+). The interval 206 to 215 (FHMFDVGGQR) is G3 motif. 5 residues coordinate GTP: Gly213, Asn279, Lys280, Asp282, and Ala353. A G4 motif region spans residues 275–282 (ILFLNKQD). Positions 351-356 (TCAVDT) are G5 motif.

Belongs to the G-alpha family. G(s) subfamily. In terms of assembly, g proteins are composed of 3 units; alpha, beta and gamma. The alpha chain contains the guanine nucleotide binding site. Interacts with GAS2L2. Interacts (GDP-bound form) with RIC8B (via C-terminus); promoting GNAL folding and association with the plasma membrane.

The protein resides in the cell membrane. The enzyme catalyses GTP + H2O = GDP + phosphate + H(+). Functionally, guanine nucleotide-binding protein (G protein) involved as transducer in olfactory signal transduction controlled by G protein-coupled receptors (GPCRs). Contains the guanine nucleotide binding site and alternates between an active, GTP-bound state and an inactive, GDP-bound state. Signaling by an activated GPCR promotes GDP release and GTP binding. The alpha subunit has a low GTPase activity that converts bound GTP to GDP, thereby terminating the signal. Both GDP release and GTP hydrolysis are modulated by numerous regulatory proteins. GNAL/G(olf) alpha specifically mediates olfactory signal transduction within the olfactory neuroepithelium and the basal ganglia following GPCRs activation. Acts by promoting the specific activation of adenylyl cyclase ADCY3, resulting in increased levels of the signaling molecule cAMP. In Rattus norvegicus (Rat), this protein is Guanine nucleotide-binding protein G(olf) subunit alpha.